We begin with the raw amino-acid sequence, 427 residues long: Trigger factor (427 aa).

The PPIase FKBP-type domain occupies 163–248; sequence GDTVVIDFVG…IHEVKAKEVP (86 aa).

Belongs to the FKBP-type PPIase family. Tig subfamily.

The protein localises to the cytoplasm. It catalyses the reaction [protein]-peptidylproline (omega=180) = [protein]-peptidylproline (omega=0). Involved in protein export. Acts as a chaperone by maintaining the newly synthesized protein in an open conformation. Functions as a peptidyl-prolyl cis-trans isomerase. The polypeptide is Trigger factor (Streptococcus pneumoniae serotype 2 (strain D39 / NCTC 7466)).